Reading from the N-terminus, the 126-residue chain is Glycine cleavage system H protein (126 aa).

The Lipoyl-binding domain maps to 23–105; that stretch reads AATVGITDHA…YGEGWLLRVR (83 aa). K64 carries the N6-lipoyllysine modification.

The protein belongs to the GcvH family. As to quaternary structure, the glycine cleavage system is composed of four proteins: P, T, L and H. (R)-lipoate serves as cofactor.

The glycine cleavage system catalyzes the degradation of glycine. The H protein shuttles the methylamine group of glycine from the P protein to the T protein. This Rubrobacter xylanophilus (strain DSM 9941 / JCM 11954 / NBRC 16129 / PRD-1) protein is Glycine cleavage system H protein.